Consider the following 205-residue polypeptide: Small ribosomal subunit protein uS4 (205 aa).

A compositionally biased stretch (basic and acidic residues) spans 1-16; that stretch reads MSKRESSKYKIDRRMG. Positions 1-46 are disordered; it reads MSKRESSKYKIDRRMGENIWGRPKSPVNRREYGPGQHGQRRKGKLS. Residues 94-157 form the S4 RNA-binding domain; the sequence is SRLDAIVYRA…KQLVIVLESV (64 aa).

Belongs to the universal ribosomal protein uS4 family. Part of the 30S ribosomal subunit. Contacts protein S5. The interaction surface between S4 and S5 is involved in control of translational fidelity.

Its function is as follows. One of the primary rRNA binding proteins, it binds directly to 16S rRNA where it nucleates assembly of the body of the 30S subunit. Functionally, with S5 and S12 plays an important role in translational accuracy. The polypeptide is Small ribosomal subunit protein uS4 (Rhizobium rhizogenes (strain K84 / ATCC BAA-868) (Agrobacterium radiobacter)).